The following is a 155-amino-acid chain: Small ribosomal subunit protein uS7 (155 aa).

Belongs to the universal ribosomal protein uS7 family. Part of the 30S ribosomal subunit. Contacts proteins S9 and S11.

In terms of biological role, one of the primary rRNA binding proteins, it binds directly to 16S rRNA where it nucleates assembly of the head domain of the 30S subunit. Is located at the subunit interface close to the decoding center, probably blocks exit of the E-site tRNA. This Xylella fastidiosa (strain M12) protein is Small ribosomal subunit protein uS7.